Consider the following 679-residue polypeptide: Methionine--tRNA ligase (679 aa).

The 'HIGH' region motif lies at 15–25 (PYANGPVHIGH). C147, C150, C160, and C163 together coordinate Zn(2+). Residues 332–336 (KISTS) carry the 'KMSKS' region motif. T335 serves as a coordination point for ATP. Positions 578-679 (DFMKLDIRVG…REVKPGSEVK (102 aa)) constitute a tRNA-binding domain.

Belongs to the class-I aminoacyl-tRNA synthetase family. MetG type 1 subfamily. As to quaternary structure, homodimer. Zn(2+) is required as a cofactor.

The protein localises to the cytoplasm. The enzyme catalyses tRNA(Met) + L-methionine + ATP = L-methionyl-tRNA(Met) + AMP + diphosphate. Its function is as follows. Is required not only for elongation of protein synthesis but also for the initiation of all mRNA translation through initiator tRNA(fMet) aminoacylation. This chain is Methionine--tRNA ligase, found in Bacteroides fragilis (strain ATCC 25285 / DSM 2151 / CCUG 4856 / JCM 11019 / LMG 10263 / NCTC 9343 / Onslow / VPI 2553 / EN-2).